Consider the following 329-residue polypeptide: MTTNNSNDNNKRYGIIKQQLQQQQQQHHQQHEQHSRLVEMTAGCGAGFMASLFTTPLDVIKTTLQVDNSSNKTIMSTVKSILDRKGGVKNLYLGLKPTLVGQIPSWAVYFSTYTFCKELFTKENDKHSLLEKESPLIFMTSAIIAGAATSICTSPIWLIKTRFITQEMVGRQKKYRGIVHSMVSIYHEEGFRGLYKGLGPSLLGVLHVGVQFPLYEKFKSILKEKNKNKELGIVEIMIASSVSKIIASVVAYPHEVLRARSQDSSPDSPNRTYRGNIIQMFKQIVREEGWRGLYRGMGVNLLRVTPSCVITFTSYEYIKKFLSQNQNHF.

The Mitochondrial intermembrane segment spans residues 1–39 (MTTNNSNDNNKRYGIIKQQLQQQQQQHHQQHEQHSRLVE). Solcar repeat units lie at residues 34-119 (HSRL…CKEL), 133-221 (ESPL…FKSI), and 231-321 (LGIV…IKKF). The helical transmembrane segment at 40–60 (MTAGCGAGFMASLFTTPLDVI) threads the bilayer. The Mitochondrial matrix portion of the chain corresponds to 61-90 (KTTLQVDNSSNKTIMSTVKSILDRKGGVKN). A helical transmembrane segment spans residues 91–111 (LYLGLKPTLVGQIPSWAVYFS). Topologically, residues 112–135 (TYTFCKELFTKENDKHSLLEKESP) are mitochondrial intermembrane. Residues 136 to 156 (LIFMTSAIIAGAATSICTSPI) form a helical membrane-spanning segment. The Mitochondrial matrix segment spans residues 157-193 (WLIKTRFITQEMVGRQKKYRGIVHSMVSIYHEEGFRG). Residues 194–214 (LYKGLGPSLLGVLHVGVQFPL) form a helical membrane-spanning segment. Residues 215–230 (YEKFKSILKEKNKNKE) lie on the Mitochondrial intermembrane side of the membrane. A helical transmembrane segment spans residues 231-251 (LGIVEIMIASSVSKIIASVVA). The Mitochondrial matrix segment spans residues 252–296 (YPHEVLRARSQDSSPDSPNRTYRGNIIQMFKQIVREEGWRGLYRG). A helical transmembrane segment spans residues 297 to 315 (MGVNLLRVTPSCVITFTSY). The Mitochondrial intermembrane segment spans residues 316–329 (EYIKKFLSQNQNHF).

The protein belongs to the mitochondrial carrier (TC 2.A.29) family.

It is found in the mitochondrion inner membrane. Its function is as follows. Mitochondrial solute carriers shuttle metabolites, nucleotides, and cofactors through the mitochondrial inner membrane. This is Mitochondrial substrate carrier family protein W (mcfW) from Dictyostelium discoideum (Social amoeba).